Consider the following 82-residue polypeptide: High-potential iron-sulfur protein (82 aa).

[4Fe-4S] cluster-binding residues include Cys-42, Cys-45, Cys-60, and Cys-74.

It belongs to the high-potential iron-sulfur protein (HiPIP) family. As to quaternary structure, homodimer.

Its subcellular location is the periplasm. In terms of biological role, specific class of high-redox-potential 4Fe-4S ferredoxins. Functions in anaerobic electron transport in most purple and in some other photosynthetic bacteria and in at least one genus (Paracoccus) of halophilic, denitrifying bacteria. In Marichromatium purpuratum (Chromatium purpuratum), this protein is High-potential iron-sulfur protein (hip).